Consider the following 366-residue polypeptide: MNISQIISYWGYPDEEYDIVTEDGYILGLYRIPYWRTDNNKNLAQRVVVYLQHGLLTSASSWISNLPNNSLGFILADAGYDVWMGNSRGNTWSRKHLYLETSSKEFWAFSFDEMAKYDLPASIDFTVKQTRQEEIFYVGHSQGTTIGFITFSTISKIAERIKIFFALAPVFSTKYLKSPLIRMTYKWKSIVMAFSGNKDFLPKTSFKKFIGSKLCPLQIFDKICLNILFMMFGYDPKNLNMSRLDVYFSHNPAGTSVQNMLHWSQLLNSTHLKAYDWGSPDLNLVHYNQTTSPLYNMTNMNVATAIWNGKSDLLADPEDVNILHSEITNHIYYKTISYYNHIDSLFGLDVYDQVYHEIIDIIQDNL.

Residue Ser141 is the Nucleophile of the active site. Residues Asp312 and His341 each act as charge relay system in the active site.

It belongs to the AB hydrolase superfamily. Lipase family.

The polypeptide is Lipase member J (LIPJ) (Homo sapiens (Human)).